The primary structure comprises 349 residues: Core protein VP7 (349 aa).

Asparagine 287 carries N-linked (GlcNAc...) asparagine; by host glycosylation.

The protein belongs to the orbivirus VP7 family. In terms of assembly, homotrimer that assemble in a complex of 260 capsomers on an inner scaffold composed of VP3.

It is found in the virion. Functionally, the VP7 protein is one of the five proteins (with VP1, VP3, VP4, and VP6) which form the inner capsid of the virus. The polypeptide is Core protein VP7 (Segment-7) (Antilocapra americana (Pronghorn)).